The sequence spans 412 residues: Putative competence-damage inducible protein (412 aa).

It belongs to the CinA family.

This chain is Putative competence-damage inducible protein, found in Bacillus cereus (strain Q1).